A 641-amino-acid polypeptide reads, in one-letter code: SH2 domain-containing protein A (641 aa).

The tract at residues 355–384 is disordered; that stretch reads VNGNGTSMEWRPQNHEEDNSSTDSENTEMR. Residues 547 to 641 form the SH2 domain; the sequence is WIEGFVTKEE…SRLGRIIRGI (95 aa).

In terms of processing, phosphorylated on tyrosine residues. As to expression, expressed in roots, leaves, stems and flowers.

The protein is SH2 domain-containing protein A of Arabidopsis thaliana (Mouse-ear cress).